Reading from the N-terminus, the 159-residue chain is Growth arrest and DNA damage-inducible protein GADD45 gamma (159 aa).

The interval 43–86 (VYESAKVLNVDPDNVTFCVLAADEEDEGDIALQIHFTLIQAFCC) is homodimerization.

Belongs to the GADD45 family. As to quaternary structure, undergoes concentration-dependent homodimerization, which is required for growth inhibititory activity and enhances interaction with PCNA. Interacts with GADD45GIP1. Interacts with PCNA.

Its function is as follows. Involved in the regulation of growth and apoptosis. Mediates activation of stress-responsive MTK1/MEKK4 MAPKKK. The polypeptide is Growth arrest and DNA damage-inducible protein GADD45 gamma (Gadd45g) (Mus musculus (Mouse)).